Consider the following 490-residue polypeptide: Aspartyl/glutamyl-tRNA(Asn/Gln) amidotransferase subunit B (490 aa).

The protein belongs to the GatB/GatE family. GatB subfamily. In terms of assembly, heterotrimer of A, B and C subunits.

The enzyme catalyses L-glutamyl-tRNA(Gln) + L-glutamine + ATP + H2O = L-glutaminyl-tRNA(Gln) + L-glutamate + ADP + phosphate + H(+). The catalysed reaction is L-aspartyl-tRNA(Asn) + L-glutamine + ATP + H2O = L-asparaginyl-tRNA(Asn) + L-glutamate + ADP + phosphate + 2 H(+). Allows the formation of correctly charged Asn-tRNA(Asn) or Gln-tRNA(Gln) through the transamidation of misacylated Asp-tRNA(Asn) or Glu-tRNA(Gln) in organisms which lack either or both of asparaginyl-tRNA or glutaminyl-tRNA synthetases. The reaction takes place in the presence of glutamine and ATP through an activated phospho-Asp-tRNA(Asn) or phospho-Glu-tRNA(Gln). The sequence is that of Aspartyl/glutamyl-tRNA(Asn/Gln) amidotransferase subunit B from Zymomonas mobilis subsp. mobilis (strain ATCC 31821 / ZM4 / CP4).